Consider the following 401-residue polypeptide: Chalcone synthase 1 (401 aa).

C168 is an active-site residue.

Belongs to the thiolase-like superfamily. Chalcone/stilbene synthases family.

The catalysed reaction is (E)-4-coumaroyl-CoA + 3 malonyl-CoA + 3 H(+) = 2',4,4',6'-tetrahydroxychalcone + 3 CO2 + 4 CoA. Its pathway is secondary metabolite biosynthesis; flavonoid biosynthesis. Its function is as follows. The primary product of this enzyme is 4,2',4',6'-tetrahydroxychalcone (also termed naringenin-chalcone or chalcone) which can under specific conditions spontaneously isomerize into naringenin. This chain is Chalcone synthase 1 (CHS1), found in Sorghum bicolor (Sorghum).